Consider the following 527-residue polypeptide: Sulfate adenylyltransferase (527 aa).

Positions 1-176 (MPIPTPHGGK…LQGINYPKHY (176 aa)) are N-terminal. Residues 177-406 (DYVDARKTPT…LRETNPPRSK (230 aa)) are catalytic. Sulfate is bound at residue Gln-206. Residues 206-209 (QTRN) and 302-305 (GRDH) each bind ATP. Catalysis depends on residues Thr-207, Arg-208, and Asn-209. Arg-208 is a binding site for sulfate. Residue Ala-306 coordinates sulfate. Val-344 serves as a coordination point for ATP. The tract at residues 407-527 (QGFAILIDNS…VNYLKDQGFY (121 aa)) is required for oligomerization; adenylyl-sulfate kinase-like.

Belongs to the sulfate adenylyltransferase family. As to quaternary structure, homohexamer. Dimer of trimers.

Its subcellular location is the cytoplasm. The enzyme catalyses sulfate + ATP + H(+) = adenosine 5'-phosphosulfate + diphosphate. It functions in the pathway sulfur metabolism; hydrogen sulfide biosynthesis; sulfite from sulfate: step 1/3. Functionally, catalyzes the first intracellular reaction of sulfate assimilation, forming adenosine-5'-phosphosulfate (APS) from inorganic sulfate and ATP. Plays an important role in sulfate activation as a component of the biosynthesis pathway of sulfur-containing amino acids. This Candida albicans (strain SC5314 / ATCC MYA-2876) (Yeast) protein is Sulfate adenylyltransferase.